The following is a 436-amino-acid chain: WD repeat domain phosphoinositide-interacting protein 2 (436 aa).

One copy of the WD 1 repeat lies at 182 to 222 (AHDSPLAALAFDASGTKLATASEKGTVIRVFSIPEGQKLFE). Residues 223 to 226 (FRRG) carry the L/FRRG motif motif. WD repeat units follow at residues 228–267 (KRCVSICSLAFSMDGMFLSASSNTETVHIFKLETVKEKPQ) and 311–349 (GHKNICALATIQKIPRLLVGAADGYLYMYNLDPQEGGEC).

The protein belongs to the WD repeat PROPPIN family.

The protein localises to the preautophagosomal structure membrane. Component of the autophagy machinery that controls the major intracellular degradation process by which cytoplasmic materials are packaged into autophagosomes and delivered to lysosomes for degradation. Involved in an early step of the formation of preautophagosomal structures. The protein is WD repeat domain phosphoinositide-interacting protein 2 (WIPI2) of Gallus gallus (Chicken).